A 693-amino-acid chain; its full sequence is Polyribonucleotide nucleotidyltransferase (693 aa).

Residues D489 and D495 each coordinate Mg(2+). The 60-residue stretch at 556–615 (PQIHVMNINPAKIKDVVGRGGATVKGIVEKTGAQIDTSDSGEVKVFAKDKKSMDMAVAMI) folds into the KH domain. The S1 motif domain occupies 625-693 (GQVYKGKIVK…GRVKLSLVAR (69 aa)).

It belongs to the polyribonucleotide nucleotidyltransferase family. Component of the RNA degradosome, which is a multiprotein complex involved in RNA processing and mRNA degradation. Mg(2+) serves as cofactor.

Its subcellular location is the cytoplasm. The catalysed reaction is RNA(n+1) + phosphate = RNA(n) + a ribonucleoside 5'-diphosphate. Involved in mRNA degradation. Catalyzes the phosphorolysis of single-stranded polyribonucleotides processively in the 3'- to 5'-direction. The sequence is that of Polyribonucleotide nucleotidyltransferase from Francisella tularensis subsp. holarctica (strain OSU18).